The sequence spans 143 residues: UPF0102 protein Acid345_3985 (143 aa).

This sequence belongs to the UPF0102 family.

In Koribacter versatilis (strain Ellin345), this protein is UPF0102 protein Acid345_3985.